The following is a 195-amino-acid chain: ATP-dependent Clp protease proteolytic subunit 2 (195 aa).

Ser95 acts as the Nucleophile in catalysis. The active site involves His120.

The protein belongs to the peptidase S14 family. As to quaternary structure, fourteen ClpP subunits assemble into 2 heptameric rings which stack back to back to give a disk-like structure with a central cavity, resembling the structure of eukaryotic proteasomes.

Its subcellular location is the cytoplasm. It catalyses the reaction Hydrolysis of proteins to small peptides in the presence of ATP and magnesium. alpha-casein is the usual test substrate. In the absence of ATP, only oligopeptides shorter than five residues are hydrolyzed (such as succinyl-Leu-Tyr-|-NHMec, and Leu-Tyr-Leu-|-Tyr-Trp, in which cleavage of the -Tyr-|-Leu- and -Tyr-|-Trp bonds also occurs).. In terms of biological role, cleaves peptides in various proteins in a process that requires ATP hydrolysis. Has a chymotrypsin-like activity. Plays a major role in the degradation of misfolded proteins. This is ATP-dependent Clp protease proteolytic subunit 2 from Methylococcus capsulatus (strain ATCC 33009 / NCIMB 11132 / Bath).